A 475-amino-acid chain; its full sequence is Fez family zinc finger protein 1 (475 aa).

An Engrailed homology 1 repressor motif is present at residues Pro28–Pro43. C2H2-type zinc fingers lie at residues Phe260–His282, Phe288–His310, His316–His338, Phe344–His366, Phe372–His394, and Phe400–His423. The interval Gly428–Gln475 is disordered. The segment covering Thr439–Leu466 has biased composition (pro residues).

Belongs to the krueppel C2H2-type zinc-finger protein family. Expressed in brain. Little or no expression in other tissues. Overexpressed specifically in gastric cancers. A 2- to 20-fold increase is found in over 50% of gastric cancer tissues.

It localises to the nucleus. Its function is as follows. Transcription repressor. Involved in the axonal projection and proper termination of olfactory sensory neurons (OSN). Plays a role in rostro-caudal patterning of the diencephalon and in prethalamic formation. Expression is required in OSN to cell-autonomously regulate OSN axon projections. Regulates non-cell-autonomously the layer formation of the olfactory bulb development and the interneurons. May be required for correct rostral migration of the interneuron progenitors. The protein is Fez family zinc finger protein 1 (FEZF1) of Homo sapiens (Human).